We begin with the raw amino-acid sequence, 136 residues long: Succinate dehydrogenase assembly factor 3, mitochondrial (136 aa).

A mitochondrion-targeting transit peptide spans 1 to 24 (MRASMVRRMAAAASSSASSSLRPA).

This sequence belongs to the complex I LYR family. SDHAF3 subfamily. In terms of assembly, interacts with the iron-sulfur protein subunit within the SDH catalytic dimer.

Its subcellular location is the mitochondrion matrix. In terms of biological role, plays an essential role in the assembly of succinate dehydrogenase (SDH), an enzyme complex (also referred to as respiratory complex II) that is a component of both the tricarboxylic acid (TCA) cycle and the mitochondrial electron transport chain, and which couples the oxidation of succinate to fumarate with the reduction of ubiquinone (coenzyme Q) to ubiquinol. Promotes maturation of the iron-sulfur protein subunit of the SDH catalytic dimer, protecting it from the deleterious effects of oxidants. May act together with SDHAF1. In Pyricularia oryzae (strain 70-15 / ATCC MYA-4617 / FGSC 8958) (Rice blast fungus), this protein is Succinate dehydrogenase assembly factor 3, mitochondrial.